The primary structure comprises 401 residues: Imidazolonepropionase (401 aa).

Residues H70 and H72 each contribute to the Fe(3+) site. Residues H70 and H72 each coordinate Zn(2+). 4-imidazolone-5-propanoate contacts are provided by R79, Y142, and H175. Y142 lines the N-formimidoyl-L-glutamate pocket. Position 240 (H240) interacts with Fe(3+). H240 contributes to the Zn(2+) binding site. Residue Q243 participates in 4-imidazolone-5-propanoate binding. Residue D315 coordinates Fe(3+). D315 is a binding site for Zn(2+). Positions 317 and 319 each coordinate N-formimidoyl-L-glutamate. T320 is a binding site for 4-imidazolone-5-propanoate.

The protein belongs to the metallo-dependent hydrolases superfamily. HutI family. The cofactor is Zn(2+). Requires Fe(3+) as cofactor.

It localises to the cytoplasm. It catalyses the reaction 4-imidazolone-5-propanoate + H2O = N-formimidoyl-L-glutamate. Its pathway is amino-acid degradation; L-histidine degradation into L-glutamate; N-formimidoyl-L-glutamate from L-histidine: step 3/3. Catalyzes the hydrolytic cleavage of the carbon-nitrogen bond in imidazolone-5-propanoate to yield N-formimidoyl-L-glutamate. It is the third step in the universal histidine degradation pathway. This is Imidazolonepropionase from Caulobacter vibrioides (strain ATCC 19089 / CIP 103742 / CB 15) (Caulobacter crescentus).